Consider the following 332-residue polypeptide: Lipoyl synthase (332 aa).

[4Fe-4S] cluster-binding residues include cysteine 74, cysteine 79, cysteine 85, cysteine 100, cysteine 104, cysteine 107, and serine 314. Residues 85-303 (CFGKGTATFM…EQEAYRMGFS (219 aa)) form the Radical SAM core domain.

This sequence belongs to the radical SAM superfamily. Lipoyl synthase family. The cofactor is [4Fe-4S] cluster.

It is found in the cytoplasm. The enzyme catalyses [[Fe-S] cluster scaffold protein carrying a second [4Fe-4S](2+) cluster] + N(6)-octanoyl-L-lysyl-[protein] + 2 oxidized [2Fe-2S]-[ferredoxin] + 2 S-adenosyl-L-methionine + 4 H(+) = [[Fe-S] cluster scaffold protein] + N(6)-[(R)-dihydrolipoyl]-L-lysyl-[protein] + 4 Fe(3+) + 2 hydrogen sulfide + 2 5'-deoxyadenosine + 2 L-methionine + 2 reduced [2Fe-2S]-[ferredoxin]. The protein operates within protein modification; protein lipoylation via endogenous pathway; protein N(6)-(lipoyl)lysine from octanoyl-[acyl-carrier-protein]: step 2/2. In terms of biological role, catalyzes the radical-mediated insertion of two sulfur atoms into the C-6 and C-8 positions of the octanoyl moiety bound to the lipoyl domains of lipoate-dependent enzymes, thereby converting the octanoylated domains into lipoylated derivatives. The sequence is that of Lipoyl synthase from Verminephrobacter eiseniae (strain EF01-2).